We begin with the raw amino-acid sequence, 219 residues long: Proteasome subunit beta type-9 (219 aa).

Residues 1–20 constitute a propeptide, removed in mature form; sequence MLRAGAPTAGSFRTEEVHTG. The Nucleophile role is filled by Thr-21. Residues Lys-53 and Lys-109 each carry the N6-acetyllysine modification.

Belongs to the peptidase T1B family. In terms of assembly, the 26S proteasome consists of a 20S proteasome core and two 19S regulatory subunits. The 20S proteasome core is composed of 28 subunits that are arranged in four stacked rings, resulting in a barrel-shaped structure. The two end rings are each formed by seven alpha subunits, and the two central rings are each formed by seven beta subunits. The catalytic chamber with the active sites is on the inside of the barrel. Component of the immunoproteasome, where it displaces the equivalent housekeeping subunit PSMB6. Component of the spermatoproteasome, a form of the proteasome specifically found in testis. In terms of processing, autocleaved. The resulting N-terminal Thr residue of the mature subunit is responsible for the nucleophile proteolytic activity.

The protein resides in the cytoplasm. It is found in the nucleus. It carries out the reaction Cleavage of peptide bonds with very broad specificity.. In terms of biological role, the proteasome is a multicatalytic proteinase complex which is characterized by its ability to cleave peptides with Arg, Phe, Tyr, Leu, and Glu adjacent to the leaving group at neutral or slightly basic pH. The proteasome has an ATP-dependent proteolytic activity. This subunit is involved in antigen processing to generate class I binding peptides. This is Proteasome subunit beta type-9 (Psmb9) from Mus spicilegus (Steppe mouse).